The chain runs to 141 residues: Large ribosomal subunit protein uL11 (141 aa).

The protein belongs to the universal ribosomal protein uL11 family. In terms of assembly, part of the ribosomal stalk of the 50S ribosomal subunit. Interacts with L10 and the large rRNA to form the base of the stalk. L10 forms an elongated spine to which L12 dimers bind in a sequential fashion forming a multimeric L10(L12)X complex. One or more lysine residues are methylated.

In terms of biological role, forms part of the ribosomal stalk which helps the ribosome interact with GTP-bound translation factors. This Desulfotalea psychrophila (strain LSv54 / DSM 12343) protein is Large ribosomal subunit protein uL11.